The sequence spans 396 residues: Ribosomal RNA large subunit methyltransferase I (396 aa).

In terms of domain architecture, PUA spans 2-79 (AIRIKLKPGR…REEEIDREFF (78 aa)).

The protein belongs to the methyltransferase superfamily. RlmI family.

It is found in the cytoplasm. It carries out the reaction cytidine(1962) in 23S rRNA + S-adenosyl-L-methionine = 5-methylcytidine(1962) in 23S rRNA + S-adenosyl-L-homocysteine + H(+). Functionally, specifically methylates the cytosine at position 1962 (m5C1962) of 23S rRNA. In Shewanella oneidensis (strain ATCC 700550 / JCM 31522 / CIP 106686 / LMG 19005 / NCIMB 14063 / MR-1), this protein is Ribosomal RNA large subunit methyltransferase I.